We begin with the raw amino-acid sequence, 119 residues long: Large ribosomal subunit protein bL20 (119 aa).

This sequence belongs to the bacterial ribosomal protein bL20 family.

Its function is as follows. Binds directly to 23S ribosomal RNA and is necessary for the in vitro assembly process of the 50S ribosomal subunit. It is not involved in the protein synthesizing functions of that subunit. This is Large ribosomal subunit protein bL20 from Acinetobacter baylyi (strain ATCC 33305 / BD413 / ADP1).